The chain runs to 306 residues: MTHLIDLFKPMIPSLLNNLHKGQSGRIAIMGGSKEYTGAPFFSGISSLKIGSDICHIFAPTEGGTATALKTMSPDLIVHPIEKNDPSDIIPWLLSLHVIVVGPGLGRSSGAWSCASEVIKAARNINLPIVLDGDALRLICDNLDIIKGYDKAILTPNFVEFKSLSDSVKKMIGDTSNNLLKPEHIASCLGNITIVQKGKEDIITDGNQTVVCDDEGMPRRCGGQGDILAGTVGTMYAWSQLYYKYNSNTDDKPEYPISIISAYAACSLLRHCSKKAYQISKRSTVSMDIINQISNGFEDLFPESSK.

The YjeF C-terminal domain occupies 4–300 (LIDLFKPMIP…NQISNGFEDL (297 aa)). Residues glycine 104 and 157–163 (NFVEFKS) each bind (6S)-NADPHX. Residues 197-201 (KGKED) and 216-225 (GMPRRCGGQG) contribute to the ATP site. Aspartate 226 lines the (6S)-NADPHX pocket.

It belongs to the NnrD/CARKD family. Requires Mg(2+) as cofactor.

It carries out the reaction (6S)-NADHX + ATP = ADP + phosphate + NADH + H(+). The catalysed reaction is (6S)-NADPHX + ATP = ADP + phosphate + NADPH + H(+). Its function is as follows. Catalyzes the dehydration of the S-form of NAD(P)HX at the expense of ATP, which is converted to ADP. Together with NAD(P)HX epimerase, which catalyzes the epimerization of the S- and R-forms, the enzyme allows the repair of both epimers of NAD(P)HX, a damaged form of NAD(P)H that is a result of enzymatic or heat-dependent hydration. The chain is ATP-dependent (S)-NAD(P)H-hydrate dehydratase from Dictyostelium discoideum (Social amoeba).